We begin with the raw amino-acid sequence, 307 residues long: MSHIPVLLKETINALNIKKNGIYIDGTFGNGGHTKEILKYLGQSGKLYSIDQDIKSVNKGKKIKDKRFSIIFGKFSKKIPYIYKKNKKKKIDGILLDLGISSNQINQNDRGFSFMKNGLLDMRMNNTTGIPAWKWLKKSSQKEIEKVLRKYGEERYSKKISYAIYNRNKKKTITQTLDLVQIIKKAIPKIDKYKHPATRTFQAIRIHINNEIKELKKTLKISIKILKKKRRLVIICFHSLENRIVKNFFKKHGKTFFIPRGLPITEKKIKKIENKKIKIIKKIKPKKTEIQKNKRSRSAILRIAEML.

S-adenosyl-L-methionine-binding positions include Gly-31–His-33, Asp-51, Tyr-83, Asp-97, and Gln-104.

Belongs to the methyltransferase superfamily. RsmH family.

The protein localises to the cytoplasm. The catalysed reaction is cytidine(1402) in 16S rRNA + S-adenosyl-L-methionine = N(4)-methylcytidine(1402) in 16S rRNA + S-adenosyl-L-homocysteine + H(+). Its function is as follows. Specifically methylates the N4 position of cytidine in position 1402 (C1402) of 16S rRNA. In Buchnera aphidicola subsp. Cinara cedri (strain Cc), this protein is Ribosomal RNA small subunit methyltransferase H.